Reading from the N-terminus, the 300-residue chain is Recombination-associated protein RdgC (300 aa).

Belongs to the RdgC family.

It is found in the cytoplasm. It localises to the nucleoid. Its function is as follows. May be involved in recombination. This is Recombination-associated protein RdgC from Herminiimonas arsenicoxydans.